The chain runs to 249 residues: ATP synthase subunit a (249 aa).

A run of 6 helical transmembrane segments spans residues 30-50 (SAYM…GSAG), 84-104 (FFPL…VGII), 113-133 (HIIV…IYGF), 143-163 (IFVP…IEVF), 196-216 (LLAG…GMVV), and 221-241 (LELL…CIYL).

Belongs to the ATPase A chain family. As to quaternary structure, F-type ATPases have 2 components, CF(1) - the catalytic core - and CF(0) - the membrane proton channel. CF(1) has five subunits: alpha(3), beta(3), gamma(1), delta(1), epsilon(1). CF(0) has four main subunits: a, b, b' and c.

Its subcellular location is the cell inner membrane. Its function is as follows. Key component of the proton channel; it plays a direct role in the translocation of protons across the membrane. This is ATP synthase subunit a from Rhodopseudomonas palustris (strain BisA53).